The primary structure comprises 168 residues: MVVLGRVIGPHGIRGQIKVTPFTEHIDGLMEYPVWWLSNDEKSWQIVHPTSFSVHDSLLIITLEEYSDRTNASGLKGWLIAVPRSQLPQLSEDGKEGYYWSDLIGISVVNTQGEFIGTVAGLFETGANDVLRIQLPGGKEELIPFVDQVVRQVDMRSRQIMVDWELDY.

The region spanning 95–168 is the PRC barrel domain; that stretch reads KEGYYWSDLI…QIMVDWELDY (74 aa).

Belongs to the RimM family. In terms of assembly, binds ribosomal protein uS19.

It localises to the cytoplasm. In terms of biological role, an accessory protein needed during the final step in the assembly of 30S ribosomal subunit, possibly for assembly of the head region. Essential for efficient processing of 16S rRNA. May be needed both before and after RbfA during the maturation of 16S rRNA. It has affinity for free ribosomal 30S subunits but not for 70S ribosomes. In Nitrosomonas eutropha (strain DSM 101675 / C91 / Nm57), this protein is Ribosome maturation factor RimM.